We begin with the raw amino-acid sequence, 370 residues long: Peptide chain release factor 1 (370 aa).

Gln231 carries the post-translational modification N5-methylglutamine. The segment covering 284 to 293 has biased composition (basic and acidic residues); that stretch reads AREERERETR. Residues 284-303 are disordered; sequence AREERERETRAAQVGTGERS.

The protein belongs to the prokaryotic/mitochondrial release factor family. In terms of processing, methylated by PrmC. Methylation increases the termination efficiency of RF1.

Its subcellular location is the cytoplasm. In terms of biological role, peptide chain release factor 1 directs the termination of translation in response to the peptide chain termination codons UAG and UAA. In Deinococcus geothermalis (strain DSM 11300 / CIP 105573 / AG-3a), this protein is Peptide chain release factor 1.